The chain runs to 449 residues: Phosphoglucosamine mutase (449 aa).

S100 serves as the catalytic Phosphoserine intermediate. Residues S100, D241, D243, and D245 each coordinate Mg(2+). S100 is subject to Phosphoserine.

Belongs to the phosphohexose mutase family. Mg(2+) is required as a cofactor. In terms of processing, activated by phosphorylation.

It catalyses the reaction alpha-D-glucosamine 1-phosphate = D-glucosamine 6-phosphate. Functionally, catalyzes the conversion of glucosamine-6-phosphate to glucosamine-1-phosphate. The chain is Phosphoglucosamine mutase from Clostridium botulinum (strain Kyoto / Type A2).